The primary structure comprises 568 residues: Fumarate hydratase 2 (568 aa).

C133 is a [4Fe-4S] cluster binding site. Residues 134–135, R173, G216, and 219–225 contribute to the (S)-malate site; these read QD and NKAYLYQ. Residues C252 and C346 each contribute to the [4Fe-4S] cluster site. Residues R421, 467-471, and K491 contribute to the (S)-malate site; that span reads TTAGR.

Belongs to the class-I fumarase family. In terms of assembly, homodimer. Requires [4Fe-4S] cluster as cofactor.

Its subcellular location is the cytoplasm. The protein resides in the cytosol. The catalysed reaction is (S)-malate = fumarate + H2O. Its activity is regulated as follows. Specifically and competitively inhibited by 2-thiomalate, which coordinates with the catalytic [4Fe-4S] cluster. Weakly inhibited by malonate. Functionally, cytosolic fumarate hydratase that catalyzes the reversible hydration of fumarate to (S)-malate. The protein is Fumarate hydratase 2 of Leishmania major.